The sequence spans 147 residues: Auxin-responsive protein SAUR41 (147 aa).

This sequence belongs to the ARG7 family. As to expression, specifically expressed in the quiescent center and cortex or endodermis initials of root stem niches. Expressed in vascular tissues from hypocotyls, petioles and cotyledons.

It is found in the cytoplasm. Functionally, plays a role in the regulation of cell expansion, root meristem patterning and auxin transport. The protein is Auxin-responsive protein SAUR41 of Arabidopsis thaliana (Mouse-ear cress).